A 150-amino-acid chain; its full sequence is 15 kDa calcium-binding protein (150 aa).

Ala1 is modified (N-acetylalanine). EF-hand domains are found at residues 7 to 42 (TDAE…AGKS), 43 to 78 (FSEE…KMMK), 81 to 116 (WKKS…RIEP), and 118 to 150 (MSKE…IKSS). Ca(2+) is bound by residues Asp22, Asp24, Ser26, Thr28, Asp56, Asp58, Ser60, Thr62, Glu67, Asp94, Asp96, Asn98, Glu105, Asp131, Asp133, Asp135, Lys137, and Glu142.

The protein localises to the nucleus. It is found in the cytoplasm. Its subcellular location is the cytoskeleton. The protein resides in the spindle. In terms of biological role, may play an important role in mitosis of sea urchin egg. May function as a Ca(2+)-dependent intracellular modulator of microtubule assembly. The protein is 15 kDa calcium-binding protein of Hemicentrotus pulcherrimus (Sea urchin).